The chain runs to 216 residues: Probable GTP-binding protein EngB (216 aa).

Residues 27-201 (EGIEVAFAGR…SQKLNTWFNE (175 aa)) enclose the EngB-type G domain. GTP contacts are provided by residues 35 to 42 (GRSNAGKS), 62 to 66 (GRTQL), 80 to 83 (DLPG), 147 to 150 (TKAD), and 180 to 182 (FSS). The Mg(2+) site is built by Ser42 and Thr64.

It belongs to the TRAFAC class TrmE-Era-EngA-EngB-Septin-like GTPase superfamily. EngB GTPase family. Mg(2+) is required as a cofactor.

Its function is as follows. Necessary for normal cell division and for the maintenance of normal septation. The sequence is that of Probable GTP-binding protein EngB from Serratia proteamaculans (strain 568).